We begin with the raw amino-acid sequence, 154 residues long: Large ribosomal subunit protein bL17 (154 aa).

The segment at 125–154 (AASQKSSKQDRAKRVQGSKKNVDAVAESAE) is disordered.

The protein belongs to the bacterial ribosomal protein bL17 family. In terms of assembly, part of the 50S ribosomal subunit. Contacts protein L32.

In Chlorobium chlorochromatii (strain CaD3), this protein is Large ribosomal subunit protein bL17.